A 242-amino-acid chain; its full sequence is Glycerol-3-phosphate acyltransferase (242 aa).

6 consecutive transmembrane segments (helical) span residues 7–27, 61–81, 102–122, 135–155, 162–182, and 201–221; these read ISLL…IMFA, IAIG…ILLI, YYLT…PVYF, GFVF…WWTI, VSLA…IPWL, and DWYI…IIIW.

The protein belongs to the PlsY family. In terms of assembly, probably interacts with PlsX.

Its subcellular location is the cell membrane. It carries out the reaction an acyl phosphate + sn-glycerol 3-phosphate = a 1-acyl-sn-glycero-3-phosphate + phosphate. It functions in the pathway lipid metabolism; phospholipid metabolism. Its function is as follows. Catalyzes the transfer of an acyl group from acyl-phosphate (acyl-PO(4)) to glycerol-3-phosphate (G3P) to form lysophosphatidic acid (LPA). This enzyme utilizes acyl-phosphate as fatty acyl donor, but not acyl-CoA or acyl-ACP. The protein is Glycerol-3-phosphate acyltransferase of Mycoplasmoides gallisepticum (strain R(low / passage 15 / clone 2)) (Mycoplasma gallisepticum).